The sequence spans 833 residues: Scavenger receptor class F member 2 (833 aa).

Positions Met1–Ala33 are cleaved as a signal peptide. Residues Ala34–Lys433 are Extracellular-facing. EGF-like domains follow at residues Leu63–Asp102, Cys114–Glu145, Trp140–Ala174, Ser175–Asn204, Asn205–Asp233, and Phe228–Arg262. Cystine bridges form between Cys67/Cys78, Cys72/Cys90, Cys92/Cys101, Cys118/Cys126, Cys120/Cys133, Cys135/Cys144, Cys148/Cys155, Cys150/Cys162, Cys164/Cys173, Cys177/Cys185, Cys179/Cys192, Cys194/Cys203, Cys207/Cys214, Cys209/Cys221, Cys223/Cys232, Cys236/Cys243, Cys238/Cys250, and Cys252/Cys261. N-linked (GlcNAc...) asparagine glycosylation occurs at Asn75. N-linked (GlcNAc...) asparagine glycosylation is found at Asn302 and Asn357. One can recognise an EGF-like 7 domain in the interval Cys364–Asn395. 3 disulfide bridges follow: Cys368–Cys376, Cys371–Cys383, and Cys385–Cys394. Residue Asn395 is glycosylated (N-linked (GlcNAc...) asparagine). The chain crosses the membrane as a helical span at residues Gly434 to Gly454. The Cytoplasmic portion of the chain corresponds to Cys455–Ser833. A phosphoserine mark is found at Ser538 and Ser600. The disordered stretch occupies residues Ser578 to Ser833. A Phosphotyrosine modification is found at Tyr615. A compositionally biased stretch (basic and acidic residues) spans Ala619–Asn630. A phosphoserine mark is found at Ser638, Ser640, and Ser695. Residue Thr712 is modified to Phosphothreonine. Residues Glu748 to Lys761 are compositionally biased toward basic and acidic residues. A compositionally biased stretch (low complexity) spans Ala781–Ala798. The span at Lys804 to Ser816 shows a compositional bias: basic residues.

As to quaternary structure, homophilic and heterophilic interaction via its extracellular domain. Interacts with SCARF1. The heterophilic interaction with SCARF1, which is stronger than the homophilic interaction with itself, is suppressed by the presence of SCARF1 ligand such as Ac-LDL.

The protein localises to the membrane. Its function is as follows. Probable adhesion protein, which mediates homophilic and heterophilic interactions. In contrast to SCARF1, it poorly mediates the binding and degradation of acetylated low density lipoprotein (Ac-LDL). This is Scavenger receptor class F member 2 (Scarf2) from Mus musculus (Mouse).